The chain runs to 894 residues: Septin and tuftelin-interacting protein 1 homolog (894 aa).

2 disordered regions span residues 71-149 (YEPN…DKPV) and 187-225 (NAGL…RSLG). Residues 73 to 84 (PNEHKLKNKDGE) are compositionally biased toward basic and acidic residues. Over residues 97-126 (KKKKKEKKEKKQKKKEKKEKKEKKNKKKNK) the composition is skewed to basic residues. Residues 149–195 (VGGIGAALLSKMGYKGTGGLGRDGGGMVEPIKVQVRPKNAGLASVTE) form the G-patch domain. Acidic residues predominate over residues 202–217 (DDSDDSDQSEGDTDSD). The stretch at 329-449 (KQIDIQNQDN…SDNNDNSSLE (121 aa)) forms a coiled coil. A disordered region spans residues 785-821 (NNNNNNNINNSYQQQNQQQPIKPISSPSLNSSNNNNI).

This sequence belongs to the TFP11/STIP family. Identified in the spliceosome C complex.

The protein localises to the cytoplasm. It is found in the nucleus. In terms of biological role, may be involved in pre-mRNA splicing. In Dictyostelium discoideum (Social amoeba), this protein is Septin and tuftelin-interacting protein 1 homolog (stip-1).